Consider the following 132-residue polypeptide: Small ribosomal subunit protein uS8 (132 aa).

Belongs to the universal ribosomal protein uS8 family. As to quaternary structure, part of the 30S ribosomal subunit. Contacts proteins S5 and S12.

In terms of biological role, one of the primary rRNA binding proteins, it binds directly to 16S rRNA central domain where it helps coordinate assembly of the platform of the 30S subunit. The sequence is that of Small ribosomal subunit protein uS8 from Lactobacillus delbrueckii subsp. bulgaricus (strain ATCC BAA-365 / Lb-18).